A 211-amino-acid chain; its full sequence is tRNA (guanine-N(7)-)-methyltransferase (211 aa).

Glutamate 44, aspartate 69, aspartate 96, and aspartate 118 together coordinate S-adenosyl-L-methionine. Aspartate 118 is a catalytic residue. Lysine 122 contributes to the substrate binding site. Positions 124-129 (KHEKRR) are interaction with RNA. Substrate-binding positions include aspartate 154 and 191 to 194 (TEYE).

Belongs to the class I-like SAM-binding methyltransferase superfamily. TrmB family.

The enzyme catalyses guanosine(46) in tRNA + S-adenosyl-L-methionine = N(7)-methylguanosine(46) in tRNA + S-adenosyl-L-homocysteine. It participates in tRNA modification; N(7)-methylguanine-tRNA biosynthesis. Catalyzes the formation of N(7)-methylguanine at position 46 (m7G46) in tRNA. The sequence is that of tRNA (guanine-N(7)-)-methyltransferase from Streptococcus uberis (strain ATCC BAA-854 / 0140J).